A 72-amino-acid polypeptide reads, in one-letter code: Protein kish-A (72 aa).

The N-terminal stretch at 1 to 26 is a signal peptide; that stretch reads MSAIFNFQSLLTVILLLICTCAYIRS. Topologically, residues 27–53 are extracellular; the sequence is LAPSLLDKNKSGLLGIFWKCARIGERK. A glycan (N-linked (GlcNAc...) asparagine) is linked at asparagine 35. A helical membrane pass occupies residues 54–71; sequence SPYVAVCCVVMAFSILFM. Position 72 (glutamine 72) is a topological domain, cytoplasmic.

It belongs to the KISH family.

The protein localises to the golgi apparatus membrane. Its function is as follows. Involved in the early part of the secretory pathway. This is Protein kish-A (TMEM167A) from Taeniopygia guttata (Zebra finch).